Here is a 234-residue protein sequence, read N- to C-terminus: Phosphoribosylaminoimidazole-succinocarboxamide synthase (234 aa).

This sequence belongs to the SAICAR synthetase family.

The catalysed reaction is 5-amino-1-(5-phospho-D-ribosyl)imidazole-4-carboxylate + L-aspartate + ATP = (2S)-2-[5-amino-1-(5-phospho-beta-D-ribosyl)imidazole-4-carboxamido]succinate + ADP + phosphate + 2 H(+). It functions in the pathway purine metabolism; IMP biosynthesis via de novo pathway; 5-amino-1-(5-phospho-D-ribosyl)imidazole-4-carboxamide from 5-amino-1-(5-phospho-D-ribosyl)imidazole-4-carboxylate: step 1/2. The chain is Phosphoribosylaminoimidazole-succinocarboxamide synthase from Sulfurisphaera tokodaii (strain DSM 16993 / JCM 10545 / NBRC 100140 / 7) (Sulfolobus tokodaii).